We begin with the raw amino-acid sequence, 114 residues long: UPF0473 protein OEOE_1164 (114 aa).

It belongs to the UPF0473 family.

This Oenococcus oeni (strain ATCC BAA-331 / PSU-1) protein is UPF0473 protein OEOE_1164.